Consider the following 287-residue polypeptide: MTNKEKLLQKIPELLNEVKSKNPLTHCITNFVTVNDCANAVLAIGASPIMSEDIEEVAEVVSIADALVINIGKLSHEQVEAMKISSAQANKINTPVILDPVGVGISQLRNKVTLEIIENYKLAAIRGNITEIKTIAKLTGIISESNTAKGVDVSESDIITQDNLNENADVISKLAAKLDTVILASGPIDILSDGETTIAIDNGDEMMPYITGSGCMLSSIVGSCIGATNPLEGTMVAALLMTIAGEKARSKVDSENAGTGSFRAYLIDYLYKLDGQTLINKSNIEIL.

Met50 is a binding site for substrate. Positions 126 and 185 each coordinate ATP. A substrate-binding site is contributed by Gly212.

This sequence belongs to the Thz kinase family. The cofactor is Mg(2+).

It catalyses the reaction 5-(2-hydroxyethyl)-4-methylthiazole + ATP = 4-methyl-5-(2-phosphooxyethyl)-thiazole + ADP + H(+). Its pathway is cofactor biosynthesis; thiamine diphosphate biosynthesis; 4-methyl-5-(2-phosphoethyl)-thiazole from 5-(2-hydroxyethyl)-4-methylthiazole: step 1/1. Functionally, catalyzes the phosphorylation of the hydroxyl group of 4-methyl-5-beta-hydroxyethylthiazole (THZ). This chain is Hydroxyethylthiazole kinase, found in Methanobrevibacter smithii (strain ATCC 35061 / DSM 861 / OCM 144 / PS).